The chain runs to 947 residues: Protein translocase subunit SecA 1 (947 aa).

Residues glutamine 83, 101-105 (GEGKT), and aspartate 490 each bind ATP. Residues 860–947 (AKAQEQTGQG…KTSKPTRRRG (88 aa)) are disordered. Basic and acidic residues predominate over residues 925–934 (TRRERREAAR). Residues 935–947 (KQAKTSKPTRRRG) are compositionally biased toward basic residues.

Belongs to the SecA family. As to quaternary structure, monomer and homodimer. Part of the essential Sec protein translocation apparatus which comprises SecA, SecYEG and auxiliary proteins SecDF. Other proteins may also be involved.

Its subcellular location is the cell membrane. The protein localises to the cytoplasm. It carries out the reaction ATP + H2O + cellular proteinSide 1 = ADP + phosphate + cellular proteinSide 2.. Functionally, part of the Sec protein translocase complex. Interacts with the SecYEG preprotein conducting channel. Has a central role in coupling the hydrolysis of ATP to the transfer of proteins into and across the cell membrane, serving as an ATP-driven molecular motor driving the stepwise translocation of polypeptide chains across the membrane. In Mycobacterium sp. (strain JLS), this protein is Protein translocase subunit SecA 1.